Here is a 223-residue protein sequence, read N- to C-terminus: Chorismate dehydratase (223 aa).

The protein belongs to the MqnA/MqnD family. MqnA subfamily.

It catalyses the reaction chorismate = 3-[(1-carboxyvinyl)-oxy]benzoate + H2O. The protein operates within quinol/quinone metabolism; menaquinone biosynthesis. Its function is as follows. Catalyzes the dehydration of chorismate into 3-[(1-carboxyvinyl)oxy]benzoate, a step in the biosynthesis of menaquinone (MK, vitamin K2). This Campylobacter jejuni subsp. jejuni serotype O:23/36 (strain 81-176) protein is Chorismate dehydratase.